A 76-amino-acid polypeptide reads, in one-letter code: Small ribosomal subunit protein eS17 (76 aa).

The protein belongs to the eukaryotic ribosomal protein eS17 family.

This is Small ribosomal subunit protein eS17 from Picrophilus torridus (strain ATCC 700027 / DSM 9790 / JCM 10055 / NBRC 100828 / KAW 2/3).